An 838-amino-acid polypeptide reads, in one-letter code: MSRVIVKGLPIYLEEARLRAHFLKRLQQQGRGSEDQITDVKIVKDKSGNSRRFAFIGYRSEQDAFDAIEYFNGSFIDTARIEVAMAKSFADPRVPTPMREKRREALKRLREREDRILAEKRQKQTKPQHGIDAEISKNKQLQEFIETMNPKMAAAAANPMARAAEQPASANPLLSALHGAEDDEEVDMFQLSEQESDDEYTDLHQRPQSAEEDELEEPAVGQDLDAAPAPDAAEDGMATNQEVSDLEWLKNRRIRIRDGEDAEAAPAPQEQAAEEPAEQEVPQEDEVSAEEAALTKIRATGRLFLRNILYDATEEDFKQLFSPYGELEEVHVAVDTRTGQSKGFAYVLFKDPEHAANAYIELDKQIFQGRLLHILPADAKKTHRLDEFDLKNLPLKKQRELKRKATAAQQTFSWNSLFMNQDAVLSSVAAKLGMEKSQLIDPENSGSAVKQALAEAHVIGDVRKYFEARGVDLTQFEKFKKVTERDDRIILVKNFPHGTTREELAELFLPFGKIERLLMPPSGTIAIIQYRDVPAARGAFTKLSYKRFKEAILYLEKGPKDCFSREPRGDELLEGDAAPEDVKEIKKSVEDVMDADSKTPSSEATAIDGPTVSIFVKNLNFSTTSAQLAEKFKPFSGFVVAQVKTKPDPKNSDKKLSMGFGFIEFRTKEQAGAVIAAMDGAVIDGHKIQLKISHKQSSLPKTSKGSKKKISGKIIVKNLPFEATRKDVFELFSSFGQLKSVRVPKKFDKSARGFAFVEFLLPSEAENAMDQLQGVHLLGRRLVMQYAEQESDDVEEQISKMTMKMKKQAAVSKMGALRNSGKRKIDMSDDENDGLNGF.

The RRM 1 domain occupies 2 to 88 (SRVIVKGLPI…ARIEVAMAKS (87 aa)). Disordered regions lie at residues 195–219 (ESDDEYTDLHQRPQSAEEDELEEPA), 225–244 (DAAPAPDAAEDGMATNQEVS), and 260–290 (EDAEAAPAPQEQAAEEPAEQEVPQEDEVSAE). Positions 272 to 289 (AAEEPAEQEVPQEDEVSA) are enriched in acidic residues. 4 consecutive RRM domains span residues 301 to 379 (GRLF…PADA), 488 to 560 (RIIL…KGPK), 612 to 695 (VSIF…ISHK), and 712 to 789 (GKII…YAEQ). The segment at 813 to 838 (KMGALRNSGKRKIDMSDDENDGLNGF) is disordered. The segment covering 828–838 (SDDENDGLNGF) has biased composition (acidic residues).

The protein belongs to the RRM MRD1 family.

The protein resides in the nucleus. Functionally, involved in pre-rRNA processing. The chain is Multiple RNA-binding domain-containing protein 1 (MRD1) from Eremothecium gossypii (strain ATCC 10895 / CBS 109.51 / FGSC 9923 / NRRL Y-1056) (Yeast).